The sequence spans 565 residues: uncharacterized protein (565 aa).

Helical transmembrane passes span 14-34, 36-56, 92-112, 117-137, and 157-177; these read LAIFLTLFVGFWIGKIKIGKF, LGVVTSVLLVGVLVGQLDITV, MGFAAIMCVFCLIIPWILAKI, VGEAAGLLAGSQTISAVIGVA, and IIPVSYAVTYIFGTAGSAWVL. The 86-residue stretch at 296–381 folds into the RCK C-terminal domain; sequence PEVLDPQLLD…VDAAAKQLGY (86 aa). Transmembrane regions (helical) follow at residues 391–411, 414–434, 448–468, 481–501, 508–530, and 545–565; these read MIFVGLGILIGGLIGALSIHM, VPISLSTSGGALIGGLFFGWL, ALWILDNVGLNMFIAVVGIAA, LSLFIVGALATSIPLIAGILM, FHPALVLGCTAGARTTTAALGAI, and VTYAVGNTLLIIWGVVIVLLM.

It belongs to the AAE transporter (TC 2.A.81) family.

It localises to the cell membrane. This is an uncharacterized protein from Bacteroides fragilis (strain YCH46).